The following is a 323-amino-acid chain: tRNA U34 carboxymethyltransferase (323 aa).

Carboxy-S-adenosyl-L-methionine contacts are provided by residues Lys-91, Trp-105, Lys-110, Gly-130, 152–154, 181–182, Met-196, Tyr-200, and Arg-315; these read DPT and IE.

This sequence belongs to the class I-like SAM-binding methyltransferase superfamily. CmoB family. In terms of assembly, homotetramer.

It catalyses the reaction carboxy-S-adenosyl-L-methionine + 5-hydroxyuridine(34) in tRNA = 5-carboxymethoxyuridine(34) in tRNA + S-adenosyl-L-homocysteine + H(+). In terms of biological role, catalyzes carboxymethyl transfer from carboxy-S-adenosyl-L-methionine (Cx-SAM) to 5-hydroxyuridine (ho5U) to form 5-carboxymethoxyuridine (cmo5U) at position 34 in tRNAs. The protein is tRNA U34 carboxymethyltransferase of Escherichia coli (strain K12 / MC4100 / BW2952).